Reading from the N-terminus, the 176-residue chain is Parathyroid hormone-related protein (176 aa).

Residues 1–25 (MMFTKLFQQWSFAVFLLSYSVPSYG) form the signal peptide. Positions 26 to 37 (RSVEGISRRLKR) are excised as a propeptide. Residues 58–69 (RIFLQNLIEGVN) are important for receptor binding. The segment at 76–157 (TSEVSPNPKP…WLNSGMYGSN (82 aa)) is disordered. Polar residues-rich tracts occupy residues 77–91 (SEVS…NTKN) and 106–116 (TQETNKSQTYK). The Nuclear localization signal motif lies at 109–130 (TNKSQTYKEQPLKVSGKKKKAK). Residues 123–133 (SGKKKKAKPGK) show a composition bias toward basic residues.

The protein belongs to the parathyroid hormone family.

Its subcellular location is the secreted. It is found in the cytoplasm. It localises to the nucleus. In terms of biological role, neuroendocrine peptide which is a critical regulator of cellular and organ growth, development, migration, differentiation and survival and of epithelial calcium ion transport. Acts by binding to its receptor, PTH1R, activating G protein-coupled receptor signaling. Regulates endochondral bone development and epithelial-mesenchymal interactions during the formation of the mammary glands and teeth. Required for skeletal homeostasis. Its function is as follows. Potent inhibitor of osteoclastic bone resorption. This Gallus gallus (Chicken) protein is Parathyroid hormone-related protein (PTHLH).